A 328-amino-acid polypeptide reads, in one-letter code: MSEMLLFEALREGLQEEMDRDPKVLVMGEDVGHYGGSYKVTKGFAEKYGDLRLLDTPIAENSFTGMAIGAAMTGLRPVVEGMNMGFLLLAFNQIANNAGMLHYTSGANFTIPIVIRGPGGVGRQLGAEHSQRLESYFQSVPGLQLVACSTPINAKGLIKSSIRSENPVILFEHVLLYNLKETIPDNEYLVCLEKAEIVRPGTDITILTYSRMRHHVLQATKSLVYKGYDPEIIDIVSLKPVDLGTISTSIKKTHKVLIVEECMRTGGIGASLRATIMEHLFDFLDAPIMCLSSQDVPTPYSGPLEELTVIQPAQIVQAVEQLCNNGNN.

Glu-60 contacts thiamine diphosphate. Ile-113, Ile-162, and Asn-166 together coordinate K(+).

In terms of assembly, heterodimer of an alpha and a beta chain. The cofactor is thiamine diphosphate.

It is found in the plastid. The protein resides in the chloroplast. It catalyses the reaction N(6)-[(R)-lipoyl]-L-lysyl-[protein] + pyruvate + H(+) = N(6)-[(R)-S(8)-acetyldihydrolipoyl]-L-lysyl-[protein] + CO2. Its function is as follows. The pyruvate dehydrogenase complex catalyzes the overall conversion of pyruvate to acetyl-CoA and CO(2). It contains multiple copies of three enzymatic components: pyruvate dehydrogenase (E1), dihydrolipoamide acetyltransferase (E2) and lipoamide dehydrogenase (E3). The sequence is that of Pyruvate dehydrogenase E1 component subunit beta (pdhB) from Staurastrum punctulatum (Green alga).